Reading from the N-terminus, the 290-residue chain is Phosphoribosylaminoimidazole-succinocarboxamide synthase (290 aa).

It belongs to the SAICAR synthetase family.

The catalysed reaction is 5-amino-1-(5-phospho-D-ribosyl)imidazole-4-carboxylate + L-aspartate + ATP = (2S)-2-[5-amino-1-(5-phospho-beta-D-ribosyl)imidazole-4-carboxamido]succinate + ADP + phosphate + 2 H(+). Its pathway is purine metabolism; IMP biosynthesis via de novo pathway; 5-amino-1-(5-phospho-D-ribosyl)imidazole-4-carboxamide from 5-amino-1-(5-phospho-D-ribosyl)imidazole-4-carboxylate: step 1/2. This is Phosphoribosylaminoimidazole-succinocarboxamide synthase from Haemophilus influenzae (strain PittEE).